Consider the following 278-residue polypeptide: Ribosomal RNA small subunit methyltransferase A (278 aa).

Positions 18, 20, 45, 66, 89, and 110 each coordinate S-adenosyl-L-methionine.

It belongs to the class I-like SAM-binding methyltransferase superfamily. rRNA adenine N(6)-methyltransferase family. RsmA subfamily.

It localises to the cytoplasm. The catalysed reaction is adenosine(1518)/adenosine(1519) in 16S rRNA + 4 S-adenosyl-L-methionine = N(6)-dimethyladenosine(1518)/N(6)-dimethyladenosine(1519) in 16S rRNA + 4 S-adenosyl-L-homocysteine + 4 H(+). Functionally, specifically dimethylates two adjacent adenosines (A1518 and A1519) in the loop of a conserved hairpin near the 3'-end of 16S rRNA in the 30S particle. May play a critical role in biogenesis of 30S subunits. This Cupriavidus metallidurans (strain ATCC 43123 / DSM 2839 / NBRC 102507 / CH34) (Ralstonia metallidurans) protein is Ribosomal RNA small subunit methyltransferase A.